Consider the following 414-residue polypeptide: V-set and immunoglobulin domain-containing protein 8 (414 aa).

Residues 1–21 form the signal peptide; sequence MRVGGAFHLLLVCLSPALLSA. 2 consecutive Ig-like V-type domains span residues 22 to 141 and 146 to 257; these read VRIN…VIVT and PAVP…VKVS. Residues 22 to 263 are Extracellular-facing; it reads VRINGDGQEV…VKVSDSRRIG (242 aa). 2 disulfides stabilise this stretch: Cys-44–Cys-126 and Cys-167–Cys-239. The helical transmembrane segment at 264-284 threads the bilayer; sequence VIIGIVLGSLLALGCLAVGIW. Residues 285–414 lie on the Cytoplasmic side of the membrane; it reads GLVCCCCGGS…PVQCKNGLLV (130 aa).

It is found in the membrane. This is V-set and immunoglobulin domain-containing protein 8 from Homo sapiens (Human).